Consider the following 122-residue polypeptide: Large ribosomal subunit protein uL14 (122 aa).

Belongs to the universal ribosomal protein uL14 family. In terms of assembly, part of the 50S ribosomal subunit. Forms a cluster with proteins L3 and L19. In the 70S ribosome, L14 and L19 interact and together make contacts with the 16S rRNA in bridges B5 and B8.

Functionally, binds to 23S rRNA. Forms part of two intersubunit bridges in the 70S ribosome. This is Large ribosomal subunit protein uL14 from Methylobacterium radiotolerans (strain ATCC 27329 / DSM 1819 / JCM 2831 / NBRC 15690 / NCIMB 10815 / 0-1).